The sequence spans 557 residues: Dihydroxy-acid dehydratase (557 aa).

D78 is a binding site for Mg(2+). C119 serves as a coordination point for [2Fe-2S] cluster. Mg(2+) is bound by residues D120 and K121. K121 is subject to N6-carboxylysine. C192 is a binding site for [2Fe-2S] cluster. Residue E442 coordinates Mg(2+). Residue S468 is the Proton acceptor of the active site.

The protein belongs to the IlvD/Edd family. In terms of assembly, homodimer. [2Fe-2S] cluster serves as cofactor. It depends on Mg(2+) as a cofactor.

The enzyme catalyses (2R)-2,3-dihydroxy-3-methylbutanoate = 3-methyl-2-oxobutanoate + H2O. It carries out the reaction (2R,3R)-2,3-dihydroxy-3-methylpentanoate = (S)-3-methyl-2-oxopentanoate + H2O. The protein operates within amino-acid biosynthesis; L-isoleucine biosynthesis; L-isoleucine from 2-oxobutanoate: step 3/4. It participates in amino-acid biosynthesis; L-valine biosynthesis; L-valine from pyruvate: step 3/4. Functionally, functions in the biosynthesis of branched-chain amino acids. Catalyzes the dehydration of (2R,3R)-2,3-dihydroxy-3-methylpentanoate (2,3-dihydroxy-3-methylvalerate) into 2-oxo-3-methylpentanoate (2-oxo-3-methylvalerate) and of (2R)-2,3-dihydroxy-3-methylbutanoate (2,3-dihydroxyisovalerate) into 2-oxo-3-methylbutanoate (2-oxoisovalerate), the penultimate precursor to L-isoleucine and L-valine, respectively. The polypeptide is Dihydroxy-acid dehydratase (Bacillus mycoides (strain KBAB4) (Bacillus weihenstephanensis)).